Reading from the N-terminus, the 260-residue chain is Acetylglutamate kinase (260 aa).

Substrate is bound by residues 41–42, Arg63, and Asn156; that span reads GG.

This sequence belongs to the acetylglutamate kinase family. ArgB subfamily.

It localises to the cytoplasm. It carries out the reaction N-acetyl-L-glutamate + ATP = N-acetyl-L-glutamyl 5-phosphate + ADP. It functions in the pathway amino-acid biosynthesis; L-arginine biosynthesis; N(2)-acetyl-L-ornithine from L-glutamate: step 2/4. Catalyzes the ATP-dependent phosphorylation of N-acetyl-L-glutamate. This chain is Acetylglutamate kinase, found in Halalkalibacterium halodurans (strain ATCC BAA-125 / DSM 18197 / FERM 7344 / JCM 9153 / C-125) (Bacillus halodurans).